The sequence spans 208 residues: Photosystem I reaction center subunit II-1, chloroplastic (208 aa).

Residues 1–45 (MATQAAGIFNSAITTAATSGVKKLHFFSTTHRPKSLSFTKTAIRA) constitute a chloroplast transit peptide. Thr-48 is modified (phosphothreonine). Residues 49 to 72 (DSSAAAAAAPATKEAPVGFTPPQL) form a disordered region. The segment covering 50-64 (SSAAAAAAPATKEAP) has biased composition (low complexity). The ferredoxin and ferredoxin-oxidoreductase binding stretch occupies residues 141-149 (RLRSKYKIT).

The protein belongs to the PsaD family. As to quaternary structure, interacts with PGRL1A and PGRL1B. In terms of processing, phosphorylated by a threonine specific thylakoid kinase in a light activated and redox-dependent manner.

It localises to the plastid. It is found in the chloroplast thylakoid membrane. PsaD can form complexes with ferredoxin and ferredoxin-oxidoreductase in photosystem I (PS I) reaction center. PSAD may encode the ferredoxin-docking protein. The sequence is that of Photosystem I reaction center subunit II-1, chloroplastic (psaD1) from Arabidopsis thaliana (Mouse-ear cress).